Consider the following 828-residue polypeptide: Periplasmic nitrate reductase (828 aa).

Residues 1–31 (MKLSRRSFMKANAVAAAAAAAGLSVPGVARA) constitute a signal peptide (tat-type signal). A 4Fe-4S Mo/W bis-MGD-type domain is found at 39-95 (IKWDKAPCRFCGTGCGVLVGTQQGRVVACQGDPDAPVNRGLNCIKGYFLPKIMYGKD). C46, C49, C53, and C81 together coordinate [4Fe-4S] cluster. Residues K83, Q150, N175, C179, 212 to 219 (WGSNMAEM), 243 to 247 (STYQH), 262 to 264 (QSD), M372, Q376, N482, 508 to 509 (SD), K531, D558, and 718 to 727 (TGRVLEHWHT) each bind Mo-bis(molybdopterin guanine dinucleotide). A substrate-binding site is contributed by F794. Residues N802 and K819 each contribute to the Mo-bis(molybdopterin guanine dinucleotide) site.

The protein belongs to the prokaryotic molybdopterin-containing oxidoreductase family. NasA/NapA/NarB subfamily. In terms of assembly, component of the periplasmic nitrate reductase NapAB complex composed of NapA and NapB. [4Fe-4S] cluster is required as a cofactor. The cofactor is Mo-bis(molybdopterin guanine dinucleotide). In terms of processing, predicted to be exported by the Tat system. The position of the signal peptide cleavage has not been experimentally proven.

It localises to the periplasm. The catalysed reaction is 2 Fe(II)-[cytochrome] + nitrate + 2 H(+) = 2 Fe(III)-[cytochrome] + nitrite + H2O. In terms of biological role, catalytic subunit of the periplasmic nitrate reductase complex NapAB. Receives electrons from NapB and catalyzes the reduction of nitrate to nitrite. The polypeptide is Periplasmic nitrate reductase (Escherichia coli O127:H6 (strain E2348/69 / EPEC)).